The chain runs to 355 residues: UDP-N-acetylglucosamine--N-acetylmuramyl-(pentapeptide) pyrophosphoryl-undecaprenol N-acetylglucosamine transferase (355 aa).

UDP-N-acetyl-alpha-D-glucosamine contacts are provided by residues 15–17 (TGG), N127, R163, S191, I245, 264–269 (ALTVSE), and Q289.

The protein belongs to the glycosyltransferase 28 family. MurG subfamily.

It localises to the cell inner membrane. It carries out the reaction di-trans,octa-cis-undecaprenyl diphospho-N-acetyl-alpha-D-muramoyl-L-alanyl-D-glutamyl-meso-2,6-diaminopimeloyl-D-alanyl-D-alanine + UDP-N-acetyl-alpha-D-glucosamine = di-trans,octa-cis-undecaprenyl diphospho-[N-acetyl-alpha-D-glucosaminyl-(1-&gt;4)]-N-acetyl-alpha-D-muramoyl-L-alanyl-D-glutamyl-meso-2,6-diaminopimeloyl-D-alanyl-D-alanine + UDP + H(+). It functions in the pathway cell wall biogenesis; peptidoglycan biosynthesis. Its function is as follows. Cell wall formation. Catalyzes the transfer of a GlcNAc subunit on undecaprenyl-pyrophosphoryl-MurNAc-pentapeptide (lipid intermediate I) to form undecaprenyl-pyrophosphoryl-MurNAc-(pentapeptide)GlcNAc (lipid intermediate II). The protein is UDP-N-acetylglucosamine--N-acetylmuramyl-(pentapeptide) pyrophosphoryl-undecaprenol N-acetylglucosamine transferase of Yersinia enterocolitica serotype O:8 / biotype 1B (strain NCTC 13174 / 8081).